An 856-amino-acid polypeptide reads, in one-letter code: Inactive rhomboid protein 2 (856 aa).

The segment at Met1–Ser115 is disordered. Residues Met1–Thr409 lie on the Cytoplasmic side of the membrane. Ser90 is subject to Phosphoserine. A compositionally biased stretch (basic and acidic residues) spans Pro94 to Pro106. A phosphoserine mark is found at Ser113 and Ser117. The segment at Pro165 to Pro184 is disordered. Positions Ala191–Ser271 are involved in interaction with FRMD8. A phosphoserine mark is found at Ser323, Ser325, and Ser328. Residues Phe410–Phe430 traverse the membrane as a helical segment. At Ala431 to Ser660 the chain is on the lumenal side. Residues Gly531 to Pro553 form a disordered region. A helical transmembrane segment spans residues Leu661 to Leu681. Topologically, residues Arg682 to Arg692 are cytoplasmic. A helical membrane pass occupies residues Ile693–Pro713. At Tyr714 to Arg715 the chain is on the lumenal side. A helical membrane pass occupies residues Ala716 to Phe736. The Cytoplasmic segment spans residues Gln737 to Lys747. Residues Ala748–Ile768 traverse the membrane as a helical segment. At Asp769–His773 the chain is on the lumenal side. A helical transmembrane segment spans residues Ile774–Gly794. Residues Thr795–Arg802 lie on the Cytoplasmic side of the membrane. A helical membrane pass occupies residues Ala803 to Leu823. The Lumenal segment spans residues Tyr824 to His856.

The protein belongs to the peptidase S54 family. Interacts with EGF. Interacts (via cytoplasmic N-terminus) with FRMD8/iTAP; this interaction leads to mutual protein stabilization. Interacts with ADAM17/TACE. In terms of tissue distribution, found in the epidermis and esophageal epithelium.

The protein localises to the endoplasmic reticulum membrane. The protein resides in the cell membrane. Functionally, regulates ADAM17 protease, a sheddase of the epidermal growth factor (EGF) receptor ligands and TNF, thereby plays a role in sleep, cell survival, proliferation, migration and inflammation. Does not exhibit any protease activity on its own. In Homo sapiens (Human), this protein is Inactive rhomboid protein 2 (RHBDF2).